We begin with the raw amino-acid sequence, 155 residues long: Ribosome maturation factor RimP (155 aa).

This sequence belongs to the RimP family.

The protein resides in the cytoplasm. In terms of biological role, required for maturation of 30S ribosomal subunits. In Staphylococcus carnosus (strain TM300), this protein is Ribosome maturation factor RimP.